Reading from the N-terminus, the 570-residue chain is Urease subunit alpha 1 (570 aa).

The Urease domain occupies 131-570 (GGIDTHVHFI…VPMAQRYFLF (440 aa)). Ni(2+)-binding residues include histidine 136, histidine 138, and lysine 219. At lysine 219 the chain carries N6-carboxylysine. A substrate-binding site is contributed by histidine 221. Ni(2+) is bound by residues histidine 248 and histidine 274. The active-site Proton donor is the histidine 322. A Ni(2+)-binding site is contributed by aspartate 362.

The protein belongs to the metallo-dependent hydrolases superfamily. Urease alpha subunit family. As to quaternary structure, heterotrimer of UreA (gamma), UreB (beta) and UreC (alpha) subunits. Three heterotrimers associate to form the active enzyme. Ni cation serves as cofactor. Post-translationally, carboxylation allows a single lysine to coordinate two nickel ions.

Its subcellular location is the cytoplasm. It catalyses the reaction urea + 2 H2O + H(+) = hydrogencarbonate + 2 NH4(+). It functions in the pathway nitrogen metabolism; urea degradation; CO(2) and NH(3) from urea (urease route): step 1/1. In terms of biological role, may protect brucellae during their passage through the stomach. The major route of infection in human brucellosis is oral. This Brucella abortus (strain 2308) protein is Urease subunit alpha 1.